Reading from the N-terminus, the 265-residue chain is MRLYRDRAVVLRQHKLGEADRIVTLLTRDHGLVRAVAKGVRRTRSKFGARLEPFAHIDAQLHPGRNLDIVTQVVSIDAFATDIVSDYGRYTCACAMLETAERLAGEERAPAPALHGLTVSALRAVADGRRSRDLLLDAYLLRAMGIAGWAPALTECARCATPGPHRAFHVGAGGSVCPHCRPAGSTTPPPGVLDLMSALHDGDWEFAEQTPQSHRNYVSGLVAAHLQWHLERQLKTLPLVERTYHIDRTIADQRATLIGQDMDCG.

The protein belongs to the RecO family.

Its function is as follows. Involved in DNA repair and RecF pathway recombination. This chain is DNA repair protein RecO, found in Mycolicibacterium paratuberculosis (strain ATCC BAA-968 / K-10) (Mycobacterium paratuberculosis).